The primary structure comprises 304 residues: MPETALLEEVVDRVRPLLGQGKVANYIPALANIDPGKLGIAVTTIDGETIGAGDYLEPFSIQSISKVFSLTLALTLYEETEIWSRVGKEPSGHSFNSLVQVELERGKPRNPFINAGALVIADLLQSRLGAPKHRMLELVRALSQNDKVCFDKQVADSEYQHSARNAAIAYLMKSFGNFQGDVDTVLRTYFHYCALKMNCADLSKAMLYLANRGKTLDGTELISQVQTRQLNALLATSGLYDGAGEFAYRVGMPGKSGVGGGIIAVIPGELSVCVWSPELDTQGNSLAGTAMLEQLSQRLGRSIF.

Residues serine 63, asparagine 114, glutamate 158, asparagine 165, tyrosine 189, tyrosine 240, and valine 258 each contribute to the substrate site.

Belongs to the glutaminase family. As to quaternary structure, homotetramer.

The catalysed reaction is L-glutamine + H2O = L-glutamate + NH4(+). The protein is Glutaminase of Shewanella oneidensis (strain ATCC 700550 / JCM 31522 / CIP 106686 / LMG 19005 / NCIMB 14063 / MR-1).